The chain runs to 506 residues: Glutamate--tRNA ligase (506 aa).

The 'HIGH' region signature appears at 12–22 (PSPTGDPHVGT). Residues 253–257 (KLSKR) carry the 'KMSKS' region motif. Residue lysine 256 participates in ATP binding.

The protein belongs to the class-I aminoacyl-tRNA synthetase family. Glutamate--tRNA ligase type 1 subfamily. In terms of assembly, monomer.

It localises to the cytoplasm. It carries out the reaction tRNA(Glu) + L-glutamate + ATP = L-glutamyl-tRNA(Glu) + AMP + diphosphate. In terms of biological role, catalyzes the attachment of glutamate to tRNA(Glu) in a two-step reaction: glutamate is first activated by ATP to form Glu-AMP and then transferred to the acceptor end of tRNA(Glu). The chain is Glutamate--tRNA ligase from Chlamydia trachomatis serovar L2 (strain ATCC VR-902B / DSM 19102 / 434/Bu).